We begin with the raw amino-acid sequence, 544 residues long: Secreted aspartic protease 9 (544 aa).

The signal sequence occupies residues 1-17 (MRLNSVALLSLVATALA). The interval 31 to 50 (GESKDDLSPEDDSNPRFVKR) is disordered. The 415-residue stretch at 65-479 (YMATLKIGSN…DLDDYEVSLA (415 aa)) folds into the Peptidase A1 domain. Asp-83 is an active-site residue. 83–85 (DTG) serves as a coordination point for pepstatin A. Cys-98 and Cys-195 form a disulfide bridge. Residues Asn-212, Asn-240, and Asn-252 are each glycosylated (N-linked (GlcNAc...) asparagine). Residue Asp-371 is part of the active site. 371 to 375 (DTGST) contributes to the pepstatin A binding site. Cys-406 and Cys-441 are disulfide-bonded. N-linked (GlcNAc...) asparagine glycosylation is found at Asn-422 and Asn-499. Residues 500–519 (SSGSGTTSSSGTSTSTSTRH) are disordered. A lipid anchor (GPI-anchor amidated serine) is attached at Ser-520. Positions 521 to 544 (AGSIISKPVYGLLLSLLISCYVLV) are cleaved as a propeptide — removed in mature form. The helical transmembrane segment at 524–544 (IISKPVYGLLLSLLISCYVLV) threads the bilayer.

It belongs to the peptidase A1 family. In terms of assembly, monomer. The GPI-anchor is attached to the protein in the endoplasmic reticulum and serves to target the protein to the cell surface. There, the glucosamine-inositol phospholipid moiety is cleaved off and the GPI-modified mannoprotein is covalently attached via its lipidless GPI glycan remnant to the 1,6-beta-glucan of the outer cell wall layer.

The protein localises to the cell membrane. The protein resides in the secreted. It localises to the cell wall. It catalyses the reaction Preferential cleavage at the carboxyl of hydrophobic amino acids, but fails to cleave 15-Leu-|-Tyr-16, 16-Tyr-|-Leu-17 and 24-Phe-|-Phe-25 of insulin B chain. Activates trypsinogen, and degrades keratin.. In terms of biological role, secreted aspartic peptidases (SAPs) are a group of ten acidic hydrolases considered as key virulence factors. These enzymes supply the fungus with nutrient amino acids as well as are able to degrade the selected host's proteins involved in the immune defense. Moreover, acts toward human hemoglobin though limited proteolysis to generate a variety of antimicrobial hemocidins, enabling to compete with the other microorganisms of the same physiological niche using the microbicidal peptides generated from the host protein. Functionally, plays a key role in defense against host by cleaving histatin-5 (Hst 5), a peptide from human saliva that carries out fungicidal activity. The cleavage rate decreases in an order of SAP2 &gt; SAP9 &gt; SAP3 &gt; SAP7 &gt; SAP4 &gt; SAP1 &gt; SAP8. The first cleavage occurs between residues 'Lys-17' and 'His-18' of Hst 5, giving DSHAKRHHGYKRKFHEK and HHSHRGY peptides. Simultaneously, the DSHAKRHHGYKRK peptide is also formed. Further fragmentation by SAP9 results in FHEK product. The sequence is that of Secreted aspartic protease 9 from Candida albicans (strain SC5314 / ATCC MYA-2876) (Yeast).